The primary structure comprises 672 residues: tRNA 5-methylaminomethyl-2-thiouridine biosynthesis bifunctional protein MnmC (672 aa).

Positions Met1–Glu243 are tRNA (mnm(5)s(2)U34)-methyltransferase. The interval Ile269 to Leu672 is FAD-dependent cmnm(5)s(2)U34 oxidoreductase.

The protein in the N-terminal section; belongs to the methyltransferase superfamily. tRNA (mnm(5)s(2)U34)-methyltransferase family. This sequence in the C-terminal section; belongs to the DAO family. FAD is required as a cofactor.

Its subcellular location is the cytoplasm. It catalyses the reaction 5-aminomethyl-2-thiouridine(34) in tRNA + S-adenosyl-L-methionine = 5-methylaminomethyl-2-thiouridine(34) in tRNA + S-adenosyl-L-homocysteine + H(+). Functionally, catalyzes the last two steps in the biosynthesis of 5-methylaminomethyl-2-thiouridine (mnm(5)s(2)U) at the wobble position (U34) in tRNA. Catalyzes the FAD-dependent demodification of cmnm(5)s(2)U34 to nm(5)s(2)U34, followed by the transfer of a methyl group from S-adenosyl-L-methionine to nm(5)s(2)U34, to form mnm(5)s(2)U34. The polypeptide is tRNA 5-methylaminomethyl-2-thiouridine biosynthesis bifunctional protein MnmC (Vibrio vulnificus (strain CMCP6)).